Reading from the N-terminus, the 367-residue chain is Glutamate 5-kinase (367 aa).

An ATP-binding site is contributed by K10. Residues S50, D137, and N149 each contribute to the substrate site. ATP is bound by residues 169-170 and 211-217; these read TD and TGGMATK. One can recognise a PUA domain in the interval 275 to 353; that stretch reads AGEITVDDGA…QQISEILGYE (79 aa).

Belongs to the glutamate 5-kinase family.

The protein resides in the cytoplasm. The enzyme catalyses L-glutamate + ATP = L-glutamyl 5-phosphate + ADP. It functions in the pathway amino-acid biosynthesis; L-proline biosynthesis; L-glutamate 5-semialdehyde from L-glutamate: step 1/2. Catalyzes the transfer of a phosphate group to glutamate to form L-glutamate 5-phosphate. The sequence is that of Glutamate 5-kinase from Yersinia pseudotuberculosis serotype IB (strain PB1/+).